Reading from the N-terminus, the 81-residue chain is UPF0298 protein SAK_1599 (81 aa).

Belongs to the UPF0298 family.

The protein localises to the cytoplasm. The polypeptide is UPF0298 protein SAK_1599 (Streptococcus agalactiae serotype Ia (strain ATCC 27591 / A909 / CDC SS700)).